A 251-amino-acid polypeptide reads, in one-letter code: DNA repair protein RecO (251 aa).

Belongs to the RecO family.

Functionally, involved in DNA repair and RecF pathway recombination. The chain is DNA repair protein RecO from Staphylococcus saprophyticus subsp. saprophyticus (strain ATCC 15305 / DSM 20229 / NCIMB 8711 / NCTC 7292 / S-41).